Here is a 441-residue protein sequence, read N- to C-terminus: Mitochondrial distribution and morphology protein 12 (441 aa).

Residues 1 to 441 (MSIDIDWERA…VYPSFWTFLV (441 aa)) enclose the SMP-LTD domain. Disordered stretches follow at residues 68-89 (DFYEDGDEDLSVSSEEQSPMRE) and 183-289 (RAVT…RMRE). Composition is skewed to polar residues over residues 226 to 245 (SRPSTANTGNTLLSRGSVST) and 253 to 263 (PSQTLLANNPG).

The protein belongs to the MDM12 family. As to quaternary structure, component of the ER-mitochondria encounter structure (ERMES) or MDM complex, composed of MMM1, MDM10, MDM12 and MDM34. An MMM1 homodimer associates with one molecule of MDM12 on each side in a pairwise head-to-tail manner, and the SMP-LTD domains of MMM1 and MDM12 generate a continuous hydrophobic tunnel for phospholipid trafficking.

The protein resides in the mitochondrion outer membrane. It localises to the endoplasmic reticulum membrane. Functionally, component of the ERMES/MDM complex, which serves as a molecular tether to connect the endoplasmic reticulum (ER) and mitochondria. Components of this complex are involved in the control of mitochondrial shape and protein biogenesis, and function in nonvesicular lipid trafficking between the ER and mitochondria. MDM12 is required for the interaction of the ER-resident membrane protein MMM1 and the outer mitochondrial membrane-resident beta-barrel protein MDM10. The MDM12-MMM1 subcomplex functions in the major beta-barrel assembly pathway that is responsible for biogenesis of all mitochondrial outer membrane beta-barrel proteins, and acts in a late step after the SAM complex. The MDM10-MDM12-MMM1 subcomplex further acts in the TOM40-specific pathway after the action of the MDM12-MMM1 complex. Essential for establishing and maintaining the structure of mitochondria and maintenance of mtDNA nucleoids. This Paracoccidioides lutzii (strain ATCC MYA-826 / Pb01) (Paracoccidioides brasiliensis) protein is Mitochondrial distribution and morphology protein 12.